Consider the following 253-residue polypeptide: Isoprenyl transferase (253 aa).

Residue aspartate 32 is part of the active site. Residue aspartate 32 participates in Mg(2+) binding. Substrate contacts are provided by residues 33-36, tryptophan 37, arginine 45, histidine 49, and 77-79; these read GNGR and STE. Asparagine 80 functions as the Proton acceptor in the catalytic mechanism. Substrate contacts are provided by residues tryptophan 81, arginine 83, arginine 200, and 206–208; that span reads RLS. Glutamate 219 provides a ligand contact to Mg(2+).

Belongs to the UPP synthase family. Homodimer. Mg(2+) is required as a cofactor.

Its function is as follows. Catalyzes the condensation of isopentenyl diphosphate (IPP) with allylic pyrophosphates generating different type of terpenoids. The sequence is that of Isoprenyl transferase from Clostridium perfringens (strain 13 / Type A).